Here is a 177-residue protein sequence, read N- to C-terminus: Large ribosomal subunit protein uL6 (177 aa).

The protein belongs to the universal ribosomal protein uL6 family. As to quaternary structure, part of the 50S ribosomal subunit.

This protein binds to the 23S rRNA, and is important in its secondary structure. It is located near the subunit interface in the base of the L7/L12 stalk, and near the tRNA binding site of the peptidyltransferase center. This chain is Large ribosomal subunit protein uL6, found in Sinorhizobium fredii (strain NBRC 101917 / NGR234).